The sequence spans 156 residues: Small ribosomal subunit protein uS7 (156 aa).

The protein belongs to the universal ribosomal protein uS7 family. As to quaternary structure, part of the 30S ribosomal subunit. Contacts proteins S9 and S11.

Its function is as follows. One of the primary rRNA binding proteins, it binds directly to 16S rRNA where it nucleates assembly of the head domain of the 30S subunit. Is located at the subunit interface close to the decoding center, probably blocks exit of the E-site tRNA. This is Small ribosomal subunit protein uS7 from Streptococcus sanguinis (strain SK36).